We begin with the raw amino-acid sequence, 548 residues long: Chaperonin GroEL 2 (548 aa).

ATP-binding positions include 30 to 33 (TLGP), Lys51, 87 to 91 (DGTTT), Gly415, 479 to 481 (NAA), and Asp495. Residues 524–548 (APKDAPPTAPAGVPGAGAGGPGFDF) are disordered. Over residues 537-548 (PGAGAGGPGFDF) the composition is skewed to gly residues.

This sequence belongs to the chaperonin (HSP60) family. As to quaternary structure, forms a cylinder of 14 subunits composed of two heptameric rings stacked back-to-back. Interacts with the co-chaperonin GroES.

It is found in the cytoplasm. The enzyme catalyses ATP + H2O + a folded polypeptide = ADP + phosphate + an unfolded polypeptide.. Functionally, together with its co-chaperonin GroES, plays an essential role in assisting protein folding. The GroEL-GroES system forms a nano-cage that allows encapsulation of the non-native substrate proteins and provides a physical environment optimized to promote and accelerate protein folding. In Burkholderia pseudomallei (strain 668), this protein is Chaperonin GroEL 2.